An 840-amino-acid polypeptide reads, in one-letter code: MAAAVAMRSGSGSDGGGGGYDKAGMDSGKYVRYTPEQVEALERVYAECPKPSSSRRQQLLRDCPILANIEPKQIKVWFQNRRCRDKQRKEASRLQAVNRKLTAMNKLLMEENERLQKQVSQLVHENAYMKQQLQNPSLGNDTSCESNVTTPQNPLRDASNPSGLLTIAEETLTEFLSKATGTAVDWVPMPGMKPGPDSFGIVAVSHGCRGVAARACGLVNLEPTKIVEILKDRPSWFRDCRSLEVFTMFPAGNGGTIELVYMQMYAPTTLVPARDFWTLRYTTTMDDGSLVVCERSLSGSGGGPSTASAQQFVRAEMLPSGYLVRPCEGGGSIVHIVDHLDLEAWSVPEVLRPLYESSRVVAQKMTTAALRHIRQIAQETSGEVVYALGRQPAVLRTFSQRLSRGFNDAISGFNDDGWSVMGGDGIEDVIIACNAKKVRNTSTSANAFVTPGGVICAKASMLLQSVPPAVLVRFLREHRSEWADYNFDAYSASSLKTSSCSLPGLRPMRFSGSQIIMPLAHTVENEEILEVVRLEGQALTHDDGLMSRDIHLLQLCTGIDEKSMGSCFQLVFAPIDELFPDDAPLISSGFRVIPLDMKTDGTPAGRTLDLASSLEVGSTAQPTGDASMDDCNLRSVLTIAFQFPYEMHLQDSVATMARQYVRSIVSSVQRVSMAISPSRSGLNAGQKIISGFPEAPTLARWICQSYQFHLGVELLRQADDAGEALLKMLWDYEDAILCCSFKEKPVFTFANEMGLNMLETSLVALQDLSLDKIFDEAGRKALYNEIPKLMEQGYVYLPGGVCLSGMGRHVSFEQAVAWKVLGEDNNVHCLAFCFVNWSFV.

Disordered stretches follow at residues 1-26 and 135-160; these read MAAA…AGMD and NPSL…DASN. Gly residues predominate over residues 12 to 21; it reads GSDGGGGGYD. Positions 26 to 89 form a DNA-binding region, homeobox; sequence DSGKYVRYTP…NRRCRDKQRK (64 aa). Positions 86–135 form a coiled coil; that stretch reads KQRKEASRLQAVNRKLTAMNKLLMEENERLQKQVSQLVHENAYMKQQLQN. The START domain occupies 157–385; it reads DASNPSGLLT…IAQETSGEVV (229 aa).

Belongs to the HD-ZIP homeobox family. Class III subfamily. Expressed in seedlings, roots, stems, leaf sheaths and blades and panicles.

Its subcellular location is the nucleus. Functionally, probable transcription factor. This is Homeobox-leucine zipper protein HOX9 (HOX9) from Oryza sativa subsp. indica (Rice).